We begin with the raw amino-acid sequence, 188 residues long: Translation initiation factor IF-3 (188 aa).

This sequence belongs to the IF-3 family. As to quaternary structure, monomer.

Its subcellular location is the cytoplasm. IF-3 binds to the 30S ribosomal subunit and shifts the equilibrium between 70S ribosomes and their 50S and 30S subunits in favor of the free subunits, thus enhancing the availability of 30S subunits on which protein synthesis initiation begins. The protein is Translation initiation factor IF-3 of Fusobacterium nucleatum subsp. nucleatum (strain ATCC 25586 / DSM 15643 / BCRC 10681 / CIP 101130 / JCM 8532 / KCTC 2640 / LMG 13131 / VPI 4355).